The primary structure comprises 249 residues: 2,3-bisphosphoglycerate-dependent phosphoglycerate mutase (249 aa).

Substrate is bound by residues arginine 8–asparagine 15, threonine 21–glycine 22, arginine 60, glutamate 87–tyrosine 90, lysine 98, arginine 114–arginine 115, and glycine 183–asparagine 184. Histidine 9 (tele-phosphohistidine intermediate) is an active-site residue. Residue glutamate 87 is the Proton donor/acceptor of the active site.

It belongs to the phosphoglycerate mutase family. BPG-dependent PGAM subfamily.

The catalysed reaction is (2R)-2-phosphoglycerate = (2R)-3-phosphoglycerate. Its pathway is carbohydrate degradation; glycolysis; pyruvate from D-glyceraldehyde 3-phosphate: step 3/5. Catalyzes the interconversion of 2-phosphoglycerate and 3-phosphoglycerate. This Methanosphaerula palustris (strain ATCC BAA-1556 / DSM 19958 / E1-9c) protein is 2,3-bisphosphoglycerate-dependent phosphoglycerate mutase.